The following is a 364-amino-acid chain: Methylthioribose-1-phosphate isomerase (364 aa).

Residues Arg49–Ala51, Arg89, and Gln201 each bind substrate. Asp242 acts as the Proton donor in catalysis. Asn252–Lys253 lines the substrate pocket.

It belongs to the eIF-2B alpha/beta/delta subunits family. MtnA subfamily.

It carries out the reaction 5-(methylsulfanyl)-alpha-D-ribose 1-phosphate = 5-(methylsulfanyl)-D-ribulose 1-phosphate. It participates in amino-acid biosynthesis; L-methionine biosynthesis via salvage pathway; L-methionine from S-methyl-5-thio-alpha-D-ribose 1-phosphate: step 1/6. Functionally, catalyzes the interconversion of methylthioribose-1-phosphate (MTR-1-P) into methylthioribulose-1-phosphate (MTRu-1-P). This chain is Methylthioribose-1-phosphate isomerase, found in Leptospira interrogans serogroup Icterohaemorrhagiae serovar Lai (strain 56601).